Reading from the N-terminus, the 240-residue chain is Pyridoxine 5'-phosphate synthase (240 aa).

Asn6 contacts 3-amino-2-oxopropyl phosphate. 8 to 9 contributes to the 1-deoxy-D-xylulose 5-phosphate binding site; sequence DH. Residue Arg17 participates in 3-amino-2-oxopropyl phosphate binding. Residue His42 is the Proton acceptor of the active site. 1-deoxy-D-xylulose 5-phosphate-binding residues include Arg44 and His49. Residue Glu69 is the Proton acceptor of the active site. Residue Thr99 coordinates 1-deoxy-D-xylulose 5-phosphate. Residue His190 is the Proton donor of the active site. 3-amino-2-oxopropyl phosphate contacts are provided by residues Gly191 and 212 to 213; that span reads GH.

The protein belongs to the PNP synthase family. Homooctamer; tetramer of dimers.

The protein resides in the cytoplasm. It catalyses the reaction 3-amino-2-oxopropyl phosphate + 1-deoxy-D-xylulose 5-phosphate = pyridoxine 5'-phosphate + phosphate + 2 H2O + H(+). The protein operates within cofactor biosynthesis; pyridoxine 5'-phosphate biosynthesis; pyridoxine 5'-phosphate from D-erythrose 4-phosphate: step 5/5. Functionally, catalyzes the complicated ring closure reaction between the two acyclic compounds 1-deoxy-D-xylulose-5-phosphate (DXP) and 3-amino-2-oxopropyl phosphate (1-amino-acetone-3-phosphate or AAP) to form pyridoxine 5'-phosphate (PNP) and inorganic phosphate. This is Pyridoxine 5'-phosphate synthase from Pseudomonas putida (strain ATCC 700007 / DSM 6899 / JCM 31910 / BCRC 17059 / LMG 24140 / F1).